Reading from the N-terminus, the 227-residue chain is UPF0758 protein CPE2144 (227 aa).

An MPN domain is found at 105 to 227; the sequence is KISKPSDVAK…FISLKEKDIL (123 aa). Residues H176, H178, and D189 each coordinate Zn(2+). A JAMM motif motif is present at residues 176 to 189; the sequence is HNHPSGDPTPSRDD.

This sequence belongs to the UPF0758 family.

The chain is UPF0758 protein CPE2144 from Clostridium perfringens (strain 13 / Type A).